The sequence spans 289 residues: 4-hydroxy-tetrahydrodipicolinate synthase (289 aa).

Pyruvate is bound at residue T45. The active-site Proton donor/acceptor is the Y133. K161 serves as the catalytic Schiff-base intermediate with substrate. I200 serves as a coordination point for pyruvate.

The protein belongs to the DapA family. Homotetramer; dimer of dimers.

The protein resides in the cytoplasm. The catalysed reaction is L-aspartate 4-semialdehyde + pyruvate = (2S,4S)-4-hydroxy-2,3,4,5-tetrahydrodipicolinate + H2O + H(+). It participates in amino-acid biosynthesis; L-lysine biosynthesis via DAP pathway; (S)-tetrahydrodipicolinate from L-aspartate: step 3/4. Its function is as follows. Catalyzes the condensation of (S)-aspartate-beta-semialdehyde [(S)-ASA] and pyruvate to 4-hydroxy-tetrahydrodipicolinate (HTPA). This chain is 4-hydroxy-tetrahydrodipicolinate synthase, found in Coxiella burnetii (strain Dugway 5J108-111).